The following is a 237-amino-acid chain: Chloride intracellular channel protein 3 (237 aa).

A required for insertion into the membrane region spans residues 1-89; that stretch reads MAETTKLQLF…EEFLEETLGP (89 aa). Residues 13–91 form the GST N-terminal domain; sequence ASEDGESVGH…FLEETLGPPD (79 aa). A G-site motif is present at residues 23–26; the sequence is CPSC. The cysteines at positions 23 and 26 are disulfide-linked. A helical transmembrane segment spans residues 25–45; that stretch reads SCQRLFMVLLLKGVPFTLTTV. A GST C-terminal domain is found at 69 to 236; the sequence is DGDVKTDTLQ…LAAYQPAVHP (168 aa). Serine 160 is modified (phosphoserine).

The protein belongs to the chloride channel CLIC family. Associated with the C-terminal of MAPK15.

Its subcellular location is the nucleus. It is found in the membrane. It localises to the cell membrane. The protein localises to the cytoplasm. The protein resides in the secreted. Its subcellular location is the extracellular space. It is found in the extracellular matrix. It catalyses the reaction chloride(in) = chloride(out). In terms of biological role, in the soluble state, catalyzes glutaredoxin-like thiol disulfide exchange reactions with reduced glutathione as electron donor. Reduced in a glutathione-dependent way and secreted into the extracellular matrix where it activates TGM2 and promotes blood vessel growth during tissue remodeling as occurs in tumorigenesis. Can reduce specific cysteines in TGM2 and regulate cofactor binding. Can insert into membranes and form outwardly rectifying chloride ion channels. May participate in cellular growth control. The protein is Chloride intracellular channel protein 3 of Mus musculus (Mouse).